The sequence spans 51 residues: Conotoxin Cal6.33 (51 aa).

The first 22 residues, 1–22, serve as a signal peptide directing secretion; that stretch reads MKLTCVVIIAVLILTACQFTTA. 3 disulfide bridges follow: cysteine 25–cysteine 39, cysteine 32–cysteine 43, and cysteine 38–cysteine 50.

This sequence belongs to the conotoxin O1 superfamily. As to expression, expressed by the venom duct.

Its subcellular location is the secreted. In terms of biological role, probable neurotoxin. This Californiconus californicus (California cone) protein is Conotoxin Cal6.33.